Reading from the N-terminus, the 98-residue chain is DNA-binding protein Fis (98 aa).

A DNA-binding region (H-T-H motif) is located at residues Gln-74 to Lys-93.

It belongs to the transcriptional regulatory Fis family. Homodimer.

Its function is as follows. Activates ribosomal RNA transcription. Plays a direct role in upstream activation of rRNA promoters. The sequence is that of DNA-binding protein Fis from Glaesserella parasuis serovar 5 (strain SH0165) (Haemophilus parasuis).